The primary structure comprises 737 residues: Relaxin receptor 2 (737 aa).

Over 1–399 the chain is Extracellular; the sequence is MWLLLHVILL…SSSEDLLANG (399 aa). In terms of domain architecture, LDL-receptor class A spans 27–64; the sequence is LCPKGYFPCGNLTKCLPRAFHCDGVDDCGNGADEDNCG. 3 disulfides stabilise this stretch: C28–C41, C35–C54, and C48–C63. N37 carries an N-linked (GlcNAc...) asparagine glycan. N-linked (GlcNAc...) asparagine glycosylation occurs at N121. 10 LRR repeats span residues 121–142, 145–166, 169–190, 193–214, 217–238, 241–262, 265–286, 289–310, 313–334, and 337–358; these read NVTL…VFSR, ELRK…AFLG, NLQI…IFKD, QLAW…SFMG, SLFF…LCAQ, QLNW…TFLT, SLTV…TFSS, NLGE…LFSD, LLQK…QFGS, and QLQS…MFQP. Residue N257 is glycosylated (N-linked (GlcNAc...) asparagine). N318, N350, and N361 each carry an N-linked (GlcNAc...) asparagine glycan. Residues 400–420 form a helical membrane-spanning segment; the sequence is ILRVSVWVIAFITCVGNFLVI. Over 421-438 the chain is Cytoplasmic; sequence AVRSLIKAENTTHAMSIK. A helical membrane pass occupies residues 439 to 459; that stretch reads ILCCADCLMGVYLFSVGVFDI. Topologically, residues 460-478 are extracellular; the sequence is KYRGQYQKYALLWMESVPC. A disulfide bridge links C478 with C556. The chain crosses the membrane as a helical span at residues 479-501; sequence RLLGFLATLSTEVSVLLLTFLTL. Topologically, residues 502-520 are cytoplasmic; it reads EKFLVIVFPFSNLRLGKRQ. A helical membrane pass occupies residues 521–541; the sequence is TAVALASIWVVGFLIAAVPFT. Over 542 to 575 the chain is Extracellular; sequence REDYFGNFYGKNGVCFPLHYDQAEDFGSRGYSLG. A helical membrane pass occupies residues 576 to 596; it reads IFLGVNLLAFLVIVISYVTMF. The Cytoplasmic portion of the chain corresponds to 597–622; sequence CSIHKTALQTAEVRSHIGKEVAVANR. A helical membrane pass occupies residues 623-643; sequence FFFIVFSDAICWIPVFVVKIL. Over 644 to 653 the chain is Extracellular; the sequence is SLLQVEIPGT. A helical transmembrane segment spans residues 654-674; sequence ITSWIVVFFLPVNSALNPILY. Over 675–737 the chain is Cytoplasmic; the sequence is TLTTSFFKDK…GDSIMKPVSP (63 aa).

The protein belongs to the G-protein coupled receptor 1 family. Expressed in embryonic and adult gonads of males and females, as well in male gubernarculum. Expressed also in brain. Not detected in kidney, spleen and heart.

It is found in the cell membrane. Receptor for relaxin. The activity of this receptor is mediated by G proteins leading to stimulation of adenylate cyclase and an increase of cAMP. May also be a receptor for Leydig insulin-like peptide (INSL3). The polypeptide is Relaxin receptor 2 (Rxfp2) (Mus musculus (Mouse)).